The chain runs to 144 residues: MLLPKRVKYRREHRGKMRGRAKGGTEVHFGEYGIQALEASWITNRQIEAARIAMTRYMKRGGKVWIKIFPSKPYTAKPLEVRMGSGKGAPEGWVAVVKPGKVLFEISGVSEEVAREALRLASHKLPIKTKFVKREEIGGESNES.

Belongs to the universal ribosomal protein uL16 family. Part of the 50S ribosomal subunit.

Binds 23S rRNA and is also seen to make contacts with the A and possibly P site tRNAs. This Bacillus pumilus (strain SAFR-032) protein is Large ribosomal subunit protein uL16.